A 273-amino-acid chain; its full sequence is WIMGHMVNAIAQIDEFVSLGANSIETDVSFDKNANPEYTYHGIPCDCGRTCTKWEYFNTFLGGLRKATTPGDSKYHEKLVLVVFDLKTGSLYDNQAYDAGTKLAKSLLQNYWNKGNNGGRAYIVLSIPNLDHYKLITGFKETLTKEEHPELMDKVGYDFSGNDDIGDVAKAYKKAGVTGHVWQSDGITNCLLRGLDRVRKAVANRDSSNGYINKVYYWTVDKRASTRDALDAGVDGIMTNYPDVIADVLSESAYTAKFRIATYDDNPWETFKN.

His-5 is a catalytic residue. Mg(2+) contacts are provided by Glu-25 and Asp-27. The active-site Nucleophile is His-41. Disulfide bonds link Cys-45-Cys-51 and Cys-47-Cys-190. Mg(2+) is bound at residue Asp-85.

This sequence belongs to the arthropod phospholipase D family. Class II subfamily. Mg(2+) serves as cofactor. Expressed by the venom gland.

It localises to the secreted. The enzyme catalyses an N-(acyl)-sphingosylphosphocholine = an N-(acyl)-sphingosyl-1,3-cyclic phosphate + choline. It carries out the reaction an N-(acyl)-sphingosylphosphoethanolamine = an N-(acyl)-sphingosyl-1,3-cyclic phosphate + ethanolamine. It catalyses the reaction a 1-acyl-sn-glycero-3-phosphocholine = a 1-acyl-sn-glycero-2,3-cyclic phosphate + choline. The catalysed reaction is a 1-acyl-sn-glycero-3-phosphoethanolamine = a 1-acyl-sn-glycero-2,3-cyclic phosphate + ethanolamine. Its function is as follows. Dermonecrotic toxins cleave the phosphodiester linkage between the phosphate and headgroup of certain phospholipids (sphingolipid and lysolipid substrates), forming an alcohol (often choline) and a cyclic phosphate. This toxin acts on sphingomyelin (SM). It may also act on ceramide phosphoethanolamine (CPE), lysophosphatidylcholine (LPC) and lysophosphatidylethanolamine (LPE), but not on lysophosphatidylserine (LPS), and lysophosphatidylglycerol (LPG). It acts by transphosphatidylation, releasing exclusively cyclic phosphate products as second products. Induces dermonecrosis, hemolysis, increased vascular permeability, edema, inflammatory response, and platelet aggregation. This chain is Dermonecrotic toxin LsaSicTox-alphaIB1bi, found in Loxosceles sabina (Tucson recluse spider).